The primary structure comprises 118 residues: Small ribosomal subunit protein uS13 (118 aa).

A disordered region spans residues 94–118 (SLPLRGQRTKTNARTRKGPRKPIKK).

It belongs to the universal ribosomal protein uS13 family. As to quaternary structure, part of the 30S ribosomal subunit. Forms a loose heterodimer with protein S19. Forms two bridges to the 50S subunit in the 70S ribosome.

Located at the top of the head of the 30S subunit, it contacts several helices of the 16S rRNA. In the 70S ribosome it contacts the 23S rRNA (bridge B1a) and protein L5 of the 50S subunit (bridge B1b), connecting the 2 subunits; these bridges are implicated in subunit movement. Contacts the tRNAs in the A and P-sites. This Vibrio vulnificus (strain CMCP6) protein is Small ribosomal subunit protein uS13.